The primary structure comprises 562 residues: Protein wntless (562 aa).

At 1–13 (MSGTILENLSGRK) the chain is on the cytoplasmic side. A helical membrane pass occupies residues 14–34 (LSILVSSLLLCQVACFLIGGL). The Lumenal segment spans residues 35–239 (YAPVPAGHQI…AIHQNGGFTQ (205 aa)). 2 N-linked (GlcNAc...) asparagine glycosylation sites follow: Asn58 and Asn103. Residues 240–260 (VWLLLKSVLFPFIIGIMVWFW) form a helical membrane-spanning segment. Residues 261-270 (RRVHILQRSP) lie on the Cytoplasmic side of the membrane. Residues 271 to 291 (ALLEYMLLYLGGALSFLNLPL) traverse the membrane as a helical segment. The Lumenal portion of the chain corresponds to 292-311 (EYLTLSFEMPYMLLLSDVRQ). The chain crosses the membrane as a helical span at residues 312-332 (GIFYAMLLSFWLVFAGEHMLI). Residues 333–344 (QDSPNKSTIRSR) lie on the Cytoplasmic side of the membrane. A helical membrane pass occupies residues 345–365 (YWKHLSAVVVGCISLFVFDIC). Over 366-390 (ERGMQLRNPFYSIWTTPLGAKVAMS) the chain is Lumenal. A helical transmembrane segment spans residues 391–411 (FIVLAGVSAGIYFLFLCYMVW). At 412-441 (KVFKDIGDKRTSLPSMSQARRLHYEGLIYR) the chain is on the cytoplasmic side. A helical membrane pass occupies residues 442–462 (FKFLMLATLLCAGLTVAGFIM). At 463 to 482 (GQMAEGHWKWNEDIEIQLTS) the chain is on the lumenal side. Residues 483 to 503 (AFLTGVYGMWNIYIFALLILY) traverse the membrane as a helical segment. Residues 504–562 (APSHKQWPTMRHSDETTQSNENIVASAASEEIEFSNLPSDSNPSEISSLTSFTRKVAFD) lie on the Cytoplasmic side of the membrane. The segment at 538–562 (SNLPSDSNPSEISSLTSFTRKVAFD) is disordered. Over residues 539–556 (NLPSDSNPSEISSLTSFT) the composition is skewed to polar residues.

Belongs to the wntless family. Interacts with wg; in the Golgi. Interacts with Vps35, a component of the retromer complex; wls stability is regulated by Vps35.

Its subcellular location is the presynaptic cell membrane. It localises to the postsynaptic cell membrane. The protein resides in the cell membrane. It is found in the endoplasmic reticulum membrane. The protein localises to the endosome membrane. Its subcellular location is the golgi apparatus membrane. Its function is as follows. A segment polarity gene required for wingless (wg)-dependent patterning processes, acting in both wg-sending cells and wg-target cells. In non-neuronal cells wls directs wg secretion. The wls traffic loop encompasses the Golgi, the cell surface, an endocytic compartment and a retrograde route leading back to the Golgi, and involves clathrin-mediated endocytosis and the retromer complex (a conserved protein complex consisting of Vps35 and Vps26). In neuronal cells (the larval motorneuron NMJ), the wg signal moves across the synapse via the release of wls-containing exosome-like vesicles. Postsynaptic wls is required for the trafficking of fz2 through the fz2-interacting protein Grip. The polypeptide is Protein wntless (Drosophila mojavensis (Fruit fly)).